Consider the following 265-residue polypeptide: Cell adhesion molecule CEACAM10 (265 aa).

Residues 1-33 (MELASAHLHKGQVPWVGLLLTASLLTYWSPATT) form the signal peptide. 2 consecutive Ig-like V-type domains span residues 35-142 (QVTV…HVHP) and 155-262 (QVTV…NVHA). 3 N-linked (GlcNAc...) asparagine glycosylation sites follow: Asn44, Asn87, and Asn224.

It belongs to the immunoglobulin superfamily. CEA family. As to expression, abundant in seminal vesicle and traces in epididymis and prostate (at protein level). Highly expressed in seminal vesicle, minor in colon and placenta and, to a lesser extent, in small intestine, caecum, stomach, salivary gland and bone marrow.

The protein localises to the secreted. Its subcellular location is the extracellular space. Functionally, may interact with other CEACAM proteins on the sperm surface. The chain is Cell adhesion molecule CEACAM10 from Mus musculus (Mouse).